A 340-amino-acid chain; its full sequence is Delta(1)-pyrroline-2-carboxylate reductase 1 (340 aa).

The active-site Charge relay system is Ser50. His51 serves as the catalytic Proton donor. Arg55 is a binding site for substrate. 123–127 (HFSAL) serves as a coordination point for NADP(+). Thr163 serves as a coordination point for substrate. Residue 181-183 (DFA) participates in NADP(+) binding. 189–190 (RG) provides a ligand contact to substrate. Residue Asp191 is the Charge relay system of the active site. Residues 232-233 (HK) and 307-313 (RLPSQRR) each bind NADP(+).

Belongs to the LDH2/MDH2 oxidoreductase family. Homodimer.

It catalyses the reaction L-proline + NAD(+) = 1-pyrroline-2-carboxylate + NADH + H(+). The catalysed reaction is L-proline + NADP(+) = 1-pyrroline-2-carboxylate + NADPH + H(+). Functionally, catalyzes the reduction of Delta(1)-pyrroline-2-carboxylate (Pyr2C) to L-proline, using NADPH as the electron donor. May be involved in a degradation pathway that converts trans-3-hydroxy-L-proline (t3LHyp) to L-proline. The chain is Delta(1)-pyrroline-2-carboxylate reductase 1 from Burkholderia ambifaria (strain ATCC BAA-244 / DSM 16087 / CCUG 44356 / LMG 19182 / AMMD) (Burkholderia cepacia (strain AMMD)).